We begin with the raw amino-acid sequence, 525 residues long: GMP synthase [glutamine-hydrolyzing] (525 aa).

The region spanning 13–202 is the Glutamine amidotransferase type-1 domain; sequence TILVLDFGSQ…AVDLCHAKQN (190 aa). Catalysis depends on Cys89, which acts as the Nucleophile. Catalysis depends on residues His176 and Glu178. The 198-residue stretch at 203–400 folds into the GMPS ATP-PPase domain; that stretch reads WTMKNFIGTE…LGISHELVWR (198 aa). 231-237 is an ATP binding site; the sequence is SGGVDST. Arg304, Asp462, Lys517, and Glu523 together coordinate XMP.

Homodimer. Mg(2+) is required as a cofactor.

The protein resides in the cytoplasm. It is found in the cytosol. It catalyses the reaction XMP + L-glutamine + ATP + H2O = GMP + L-glutamate + AMP + diphosphate + 2 H(+). The protein operates within purine metabolism; GMP biosynthesis; GMP from XMP (L-Gln route): step 1/1. Its function is as follows. Catalyzes the conversion of xanthine monophosphate (XMP) to GMP in the presence of glutamine and ATP through an adenyl-XMP intermediate. The polypeptide is GMP synthase [glutamine-hydrolyzing] (GUA1) (Candida glabrata (strain ATCC 2001 / BCRC 20586 / JCM 3761 / NBRC 0622 / NRRL Y-65 / CBS 138) (Yeast)).